Consider the following 31-residue polypeptide: YCQKWMWTCDEERKCCEGLVCRLWCKRIINM.

3 cysteine pairs are disulfide-bonded: Cys-2–Cys-16, Cys-9–Cys-21, and Cys-15–Cys-25. Residue Met-31 is modified to Methionine amide.

This sequence belongs to the neurotoxin 30 (phrixotoxin) family. Expressed by the venom gland.

The protein localises to the secreted. Potent and specific blocker of Kv4.2/KCND2 (IC(50)=34 nM) and Kv4.3/KCND3 (IC(50)=71 nM) potassium channels. Acts by altering the gating properties of these channels. The polypeptide is Kappa-theraphotoxin-Ps1b (Paraphysa scrofa (Chilean copper tarantula)).